Here is a 166-residue protein sequence, read N- to C-terminus: MAHGRQQDELQDITLLGNQDNTYNFDYRPDVLESFDNKHQGRDYFVKFNCPEFTSLCPITGQPDFATIYISYIPNVKMVESKSLKLYLFSFRNHGDFHEDCMNIIMNDLIELMDPHYIEVWGKFTPRGGISIDPYTNYGRPNSKYEKMAEHRLMNHDLYPEKIDNR.

The active-site Thioimide intermediate is the Cys-57. The Proton donor role is filled by Asp-64. Substrate-binding positions include Val-79–Ser-81 and His-98–Glu-99.

This sequence belongs to the GTP cyclohydrolase I family. QueF type 1 subfamily.

It is found in the cytoplasm. It carries out the reaction 7-aminomethyl-7-carbaguanine + 2 NADP(+) = 7-cyano-7-deazaguanine + 2 NADPH + 3 H(+). Its pathway is tRNA modification; tRNA-queuosine biosynthesis. Catalyzes the NADPH-dependent reduction of 7-cyano-7-deazaguanine (preQ0) to 7-aminomethyl-7-deazaguanine (preQ1). The polypeptide is NADPH-dependent 7-cyano-7-deazaguanine reductase (Staphylococcus aureus (strain JH1)).